A 176-amino-acid polypeptide reads, in one-letter code: NAD(P)H-quinone oxidoreductase subunit 6, chloroplastic (176 aa).

The next 5 membrane-spanning stretches (helical) occupy residues 10–30, 32–52, 61–81, 92–112, and 152–172; these read FLLV…VLLT, PIYS…FYIL, AQLL…VMFM, LWTI…VSLI, and FFLP…GAIA.

This sequence belongs to the complex I subunit 6 family. In terms of assembly, NDH is composed of at least 16 different subunits, 5 of which are encoded in the nucleus.

The protein resides in the plastid. It localises to the chloroplast thylakoid membrane. The catalysed reaction is a plastoquinone + NADH + (n+1) H(+)(in) = a plastoquinol + NAD(+) + n H(+)(out). The enzyme catalyses a plastoquinone + NADPH + (n+1) H(+)(in) = a plastoquinol + NADP(+) + n H(+)(out). Its function is as follows. NDH shuttles electrons from NAD(P)H:plastoquinone, via FMN and iron-sulfur (Fe-S) centers, to quinones in the photosynthetic chain and possibly in a chloroplast respiratory chain. The immediate electron acceptor for the enzyme in this species is believed to be plastoquinone. Couples the redox reaction to proton translocation, and thus conserves the redox energy in a proton gradient. This is NAD(P)H-quinone oxidoreductase subunit 6, chloroplastic (ndhG) from Gossypium hirsutum (Upland cotton).